The primary structure comprises 442 residues: Adenylosuccinate synthetase (442 aa).

Residues 16 to 22 (GDEGKGK) and 44 to 46 (GHT) each bind GTP. The Proton acceptor role is filled by Asp-17. The Mg(2+) site is built by Asp-17 and Gly-44. IMP-binding positions include 17–20 (DEGK), 42–45 (NAGH), Thr-133, Arg-147, Gln-228, Thr-243, and Arg-307. The active-site Proton donor is His-45. 303–309 (AVTGRPR) provides a ligand contact to substrate. Residues Arg-309, 335–337 (KLD), and 417–419 (STG) each bind GTP.

The protein belongs to the adenylosuccinate synthetase family. As to quaternary structure, homodimer. Mg(2+) is required as a cofactor.

It localises to the cytoplasm. It catalyses the reaction IMP + L-aspartate + GTP = N(6)-(1,2-dicarboxyethyl)-AMP + GDP + phosphate + 2 H(+). It participates in purine metabolism; AMP biosynthesis via de novo pathway; AMP from IMP: step 1/2. Functionally, plays an important role in the de novo pathway of purine nucleotide biosynthesis. Catalyzes the first committed step in the biosynthesis of AMP from IMP. In Koribacter versatilis (strain Ellin345), this protein is Adenylosuccinate synthetase.